We begin with the raw amino-acid sequence, 244 residues long: Small ribosomal subunit protein uS3 (244 aa).

In terms of domain architecture, KH type-2 spans 38-106 (IRKYLNARLA…DIQINIFEVK (69 aa)). Residues 217 to 244 (TQSKESGRGNNGGNNGGGKNFKRKKNNR) form a disordered region. Gly residues predominate over residues 225-235 (GNNGGNNGGGK).

Belongs to the universal ribosomal protein uS3 family. In terms of assembly, part of the 30S ribosomal subunit. Forms a tight complex with proteins S10 and S14.

In terms of biological role, binds the lower part of the 30S subunit head. Binds mRNA in the 70S ribosome, positioning it for translation. This is Small ribosomal subunit protein uS3 from Bacteroides fragilis (strain ATCC 25285 / DSM 2151 / CCUG 4856 / JCM 11019 / LMG 10263 / NCTC 9343 / Onslow / VPI 2553 / EN-2).